The primary structure comprises 238 residues: N-acetylneuraminic acid outer membrane channel protein NanC (238 aa).

The N-terminal stretch at 1 to 23 is a signal peptide; the sequence is MKKAKILSGVLLLCFSSPLISQA. Residues 24-25 lie on the Periplasmic side of the membrane; the sequence is AT. The hydrophobic stretch at 26–32 threads the membrane; that stretch reads LDVRGGY. Topologically, residues 33–39 are extracellular; that stretch reads RSGSHAY. The chain crosses the lipid bilayer at residues 40–49; that stretch reads ETRLKVSEGW. Over 50–52 the chain is Periplasmic; sequence QNG. Residues 53–61 are membrane-embedded; the sequence is WWASMESNT. The Extracellular segment spans residues 62–76; that stretch reads WNTIHDNKKENAALN. Positions 77-86 form a transmembrane segment; the sequence is DVQVEVNYAI. Residues 87–91 are Periplasmic-facing; sequence KLDDQ. A membrane pass occupies residues 92–102; sequence WTVRPGMLTHF. Residues 103–107 lie on the Extracellular side of the membrane; sequence SSNGT. At 108 to 117 the chain is embedded in the membrane; it reads RYGPYVKLSW. Residues 118-122 lie on the Periplasmic side of the membrane; that stretch reads DATKD. At 123-132 the chain is embedded in the membrane; sequence LNFGIRYRYD. At 133–151 the chain is on the extracellular side; it reads WKAYRQQDLSGDMSRDNVH. The segment at 152 to 159 is a transmembrane helix; the sequence is RWDGYVTY. The Periplasmic portion of the chain corresponds to 160–164; it reads HINSD. The hydrophobic stretch at 165-173 threads the membrane; sequence FTFAWQTTL. The Extracellular segment spans residues 174-190; that stretch reads YSKQNDYRYANHKKWAT. Residues 191 to 200 are membrane-embedded; sequence ENAFVLQYHM. At 201–203 the chain is on the periplasmic side; that stretch reads TPD. Residues 204 to 212 are membrane-embedded; it reads ITPYIEYDY. Topologically, residues 213–228 are extracellular; sequence LDRQGVYNGRDNLSEN. The chain crosses the lipid bilayer at residues 229-236; the sequence is SYRIGVSF. The Periplasmic segment spans residues 237-238; that stretch reads KL.

It belongs to the oligogalacturonate-specific porin KdgM (TC 1.B.35) family. NanC subfamily. In terms of assembly, monomer.

The protein resides in the cell outer membrane. The catalysed reaction is N-acetylneuraminate(in) = N-acetylneuraminate(out). Its function is as follows. Outer membrane channel protein allowing the entry of N-acetylneuraminic acid (Neu5Ac, the most abundant sialic acid on host cell surfaces) into the bacteria. NanC proteins form high-conductance channels which are open at low membrane potentials and which have a weak anion selectivity. This chain is N-acetylneuraminic acid outer membrane channel protein NanC (nanC), found in Escherichia coli O157:H7.